A 68-amino-acid chain; its full sequence is DNA-directed RNA polymerase subunit Rpo10 (68 aa).

Positions 7, 10, 44, and 45 each coordinate Zn(2+).

Belongs to the archaeal Rpo10/eukaryotic RPB10 RNA polymerase subunit family. In terms of assembly, part of the RNA polymerase complex. Zn(2+) is required as a cofactor.

It localises to the cytoplasm. It carries out the reaction RNA(n) + a ribonucleoside 5'-triphosphate = RNA(n+1) + diphosphate. Its function is as follows. DNA-dependent RNA polymerase (RNAP) catalyzes the transcription of DNA into RNA using the four ribonucleoside triphosphates as substrates. This Methanococcus maripaludis (strain DSM 14266 / JCM 13030 / NBRC 101832 / S2 / LL) protein is DNA-directed RNA polymerase subunit Rpo10.